The chain runs to 357 residues: Ribosomal RNA large subunit methyltransferase M (357 aa).

S-adenosyl-L-methionine-binding positions include Ser183, 216-219, Asp235, Asp255, and Asp271; that span reads APGG. Residue Lys300 is the Proton acceptor of the active site.

It belongs to the class I-like SAM-binding methyltransferase superfamily. RNA methyltransferase RlmE family. RlmM subfamily. In terms of assembly, monomer.

It localises to the cytoplasm. It carries out the reaction cytidine(2498) in 23S rRNA + S-adenosyl-L-methionine = 2'-O-methylcytidine(2498) in 23S rRNA + S-adenosyl-L-homocysteine + H(+). Catalyzes the 2'-O-methylation at nucleotide C2498 in 23S rRNA. This chain is Ribosomal RNA large subunit methyltransferase M, found in Pseudomonas syringae pv. syringae (strain B728a).